Here is a 286-residue protein sequence, read N- to C-terminus: Shikimate dehydrogenase (NADP(+)) (286 aa).

Residues 21 to 23 (TLS) and T68 each bind shikimate. Catalysis depends on K72, which acts as the Proton acceptor. D84 serves as a coordination point for NADP(+). Shikimate-binding residues include N93 and D108. Residues 132-136 (GYGGA) and L226 each bind NADP(+). Y228 lines the shikimate pocket. G249 is an NADP(+) binding site.

Belongs to the shikimate dehydrogenase family. In terms of assembly, homodimer.

The enzyme catalyses shikimate + NADP(+) = 3-dehydroshikimate + NADPH + H(+). It functions in the pathway metabolic intermediate biosynthesis; chorismate biosynthesis; chorismate from D-erythrose 4-phosphate and phosphoenolpyruvate: step 4/7. Involved in the biosynthesis of the chorismate, which leads to the biosynthesis of aromatic amino acids. Catalyzes the reversible NADPH linked reduction of 3-dehydroshikimate (DHSA) to yield shikimate (SA). The polypeptide is Shikimate dehydrogenase (NADP(+)) (Thermosynechococcus vestitus (strain NIES-2133 / IAM M-273 / BP-1)).